The following is a 197-amino-acid chain: ATP-dependent Clp protease proteolytic subunit (197 aa).

The active-site Nucleophile is the Ser-98. The active site involves His-123.

Belongs to the peptidase S14 family. As to quaternary structure, fourteen ClpP subunits assemble into 2 heptameric rings which stack back to back to give a disk-like structure with a central cavity, resembling the structure of eukaryotic proteasomes.

Its subcellular location is the cytoplasm. It carries out the reaction Hydrolysis of proteins to small peptides in the presence of ATP and magnesium. alpha-casein is the usual test substrate. In the absence of ATP, only oligopeptides shorter than five residues are hydrolyzed (such as succinyl-Leu-Tyr-|-NHMec, and Leu-Tyr-Leu-|-Tyr-Trp, in which cleavage of the -Tyr-|-Leu- and -Tyr-|-Trp bonds also occurs).. In terms of biological role, cleaves peptides in various proteins in a process that requires ATP hydrolysis. Has a chymotrypsin-like activity. Plays a major role in the degradation of misfolded proteins. The protein is ATP-dependent Clp protease proteolytic subunit of Ligilactobacillus salivarius (strain UCC118) (Lactobacillus salivarius).